We begin with the raw amino-acid sequence, 234 residues long: NLP effector protein 1 (234 aa).

Positions 1-18 (MQLRAFISVFASLACVNA) are cleaved as a signal peptide. Asn66 is a glycosylation site (N-linked (GlcNAc...) asparagine). Positions 102-112 (AFMYSWYMPKD) match the Conserved undecapeptide motif I motif. A Hepta-peptide GHRHDWE motif II motif is present at residues 119 to 125 (GHRHDWE).

This sequence belongs to the Necrosis inducing protein (NPP1) family.

The protein localises to the secreted. Its function is as follows. Secreted effector that contributes to virulence during infection by P.capsici. Induces distinct chlorosis at 3 days after inoculation of host C.annuum leaves, and all the chlorotic areas gradually turn brown and become moderately necrotic at 7 days after inoculation. Leads only to chlorotic areas, without necrosis at 7 days after non-host N.benthamiana leaves infection. Induces cell death in hot pepper. The sequence is that of NLP effector protein 1 from Phytophthora capsici.